The following is a 161-amino-acid chain: 6,7-dimethyl-8-ribityllumazine synthase (161 aa).

5-amino-6-(D-ribitylamino)uracil contacts are provided by residues F23, 61–63 (SFE), and 85–87 (AVI). 90-91 (DT) is a binding site for (2S)-2-hydroxy-3-oxobutyl phosphate. H93 functions as the Proton donor in the catalytic mechanism. F118 is a binding site for 5-amino-6-(D-ribitylamino)uracil. R132 is a binding site for (2S)-2-hydroxy-3-oxobutyl phosphate.

This sequence belongs to the DMRL synthase family.

The enzyme catalyses (2S)-2-hydroxy-3-oxobutyl phosphate + 5-amino-6-(D-ribitylamino)uracil = 6,7-dimethyl-8-(1-D-ribityl)lumazine + phosphate + 2 H2O + H(+). The protein operates within cofactor biosynthesis; riboflavin biosynthesis; riboflavin from 2-hydroxy-3-oxobutyl phosphate and 5-amino-6-(D-ribitylamino)uracil: step 1/2. In terms of biological role, catalyzes the formation of 6,7-dimethyl-8-ribityllumazine by condensation of 5-amino-6-(D-ribitylamino)uracil with 3,4-dihydroxy-2-butanone 4-phosphate. This is the penultimate step in the biosynthesis of riboflavin. The chain is 6,7-dimethyl-8-ribityllumazine synthase from Synechococcus sp. (strain WH7803).